The primary structure comprises 92 residues: Long neurotoxin 3FTx-Oxy2 (92 aa).

Residues 1 to 21 form the signal peptide; that stretch reads MKTLLLTLVVVTIVCLDLGYT. 4 cysteine pairs are disulfide-bonded: Cys-24-Cys-42, Cys-35-Cys-63, Cys-67-Cys-79, and Cys-80-Cys-85.

Belongs to the three-finger toxin family. Long-chain subfamily. Type II alpha-neurotoxin sub-subfamily. In terms of tissue distribution, expressed by the venom gland.

The protein localises to the secreted. In terms of biological role, binds with high affinity to muscular (alpha-1/CHRNA1) and neuronal (alpha-7/CHRNA7) nicotinic acetylcholine receptor (nAChR) and inhibits acetylcholine from binding to the receptor, thereby impairing neuromuscular and neuronal transmission. The sequence is that of Long neurotoxin 3FTx-Oxy2 from Oxyuranus microlepidotus (Inland taipan).